A 547-amino-acid polypeptide reads, in one-letter code: DEAD-box ATP-dependent RNA helicase 31 (547 aa).

The span at 1 to 34 (MFDFGLSEDDSELGEVDEDDGPSGFEDDLFDDEG) shows a compositional bias: acidic residues. The tract at residues 1–74 (MFDFGLSEDD…HTRESGGGDS (74 aa)) is disordered. Basic and acidic residues predominate over residues 53–70 (IKGEPIDQEGVVHTRESG). The Q motif motif lies at 79–107 (TRFDECSLSPLTLKGVKAAGYERMTAVQE). The Helicase ATP-binding domain maps to 110–293 (LPIILKGKDV…HIAMKRDLEF (184 aa)). ATP is bound at residue 123-130 (AKTGTGKT). The DEAD box motif lies at 241-244 (DEAD). The Helicase C-terminal domain maps to 327–478 (LLTDHISENV…TKRKVEKALA (152 aa)).

This sequence belongs to the DEAD box helicase family.

It carries out the reaction ATP + H2O = ADP + phosphate + H(+). This chain is DEAD-box ATP-dependent RNA helicase 31, found in Oryza sativa subsp. japonica (Rice).